Here is an 80-residue protein sequence, read N- to C-terminus: FXYD domain-containing ion transport regulator 7 (80 aa).

Topologically, residues 1-22 (MATPTQSPTNVPEETDPFFYDY) are extracellular. O-linked (GlcNAc) threonine glycosylation is found at Thr3, Thr5, and Thr9. A helical transmembrane segment spans residues 23–45 (ATVQTVGMTLATIMFVLGIIIII). Topologically, residues 46-80 (SKKVKCRKADSRSESPTCKSCKSELPSSAPGGGGV) are cytoplasmic. The tract at residues 56–80 (SRSESPTCKSCKSELPSSAPGGGGV) is disordered. Ser73 carries the post-translational modification Phosphoserine.

The protein belongs to the FXYD family. As to quaternary structure, regulatory subunit of the sodium/potassium-transporting ATPase which is composed of a catalytic alpha subunit, a non-catalytic beta subunit and an additional regulatory subunit. The regulatory subunit, a member of the FXYD protein family, modulates the enzymatic activity in a tissue- and isoform-specific way by changing affinities of the Na+/K+-ATPase toward Na(+), K(+) or ATP. O-glycosylated; required for stabilization and translocation to the plasma membrane. Expressed specifically in brain. Expressed in both neurons and glia.

Its subcellular location is the cell membrane. Functionally, associates with and regulates the activity of the sodium/potassium-transporting ATPase (NKA) which catalyzes the hydrolysis of ATP coupled with the exchange of Na(+) and K(+) ions across the plasma membrane. Reduces the apparent affinity for external K(+), an effect that depends on the presence of external Na(+) and voltage. Increases the apparent affinity for intracellular Na(+). The polypeptide is FXYD domain-containing ion transport regulator 7 (Fxyd7) (Rattus norvegicus (Rat)).